The primary structure comprises 84 residues: MDPYGSRPSHPDDGALHGILVAFIAVLCLIGCLWAAYRLFLKECLTDCSQHTSSGVVAGPRPAATGPTAVVVHNGAEAQRSSAF.

The helical transmembrane segment at 15-35 (ALHGILVAFIAVLCLIGCLWA) threads the bilayer.

In terms of assembly, interacts with the capsid protein (CP). Part of a MP-CP-viral DNA complex.

It is found in the host membrane. Involved in the viral transport within, and between cells. This Miscanthus streak virus (isolate 91) (MiSV) protein is Putative movement protein.